The sequence spans 549 residues: Phosphoenolpyruvate carboxykinase (ATP) (549 aa).

Position 250–257 (250–257 (GLSGTGKT)) interacts with ATP.

Belongs to the phosphoenolpyruvate carboxykinase (ATP) family. Homotetramer.

It catalyses the reaction oxaloacetate + ATP = phosphoenolpyruvate + ADP + CO2. It participates in carbohydrate biosynthesis; gluconeogenesis. The sequence is that of Phosphoenolpyruvate carboxykinase (ATP) (PCK1) from Saccharomyces cerevisiae (strain ATCC 204508 / S288c) (Baker's yeast).